The chain runs to 180 residues: Large ribosomal subunit protein uL5 (180 aa).

The protein belongs to the universal ribosomal protein uL5 family. Part of the 50S ribosomal subunit; part of the 5S rRNA/L5/L18/L25 subcomplex. Contacts the 5S rRNA and the P site tRNA. Forms a bridge to the 30S subunit in the 70S ribosome.

Functionally, this is one of the proteins that bind and probably mediate the attachment of the 5S RNA into the large ribosomal subunit, where it forms part of the central protuberance. In the 70S ribosome it contacts protein S13 of the 30S subunit (bridge B1b), connecting the 2 subunits; this bridge is implicated in subunit movement. Contacts the P site tRNA; the 5S rRNA and some of its associated proteins might help stabilize positioning of ribosome-bound tRNAs. In Ralstonia pickettii (strain 12J), this protein is Large ribosomal subunit protein uL5.